The chain runs to 477 residues: MNFETVIGLEVHVELSTNSKIFSPASTKFGGDPNSNTNVIDWSLPGVLPVMNKGVIDSGIKAALALNMDIHKSMHFDRKNYFYPDNPKAYQISQFDEPIGYNGSIEIELEDGHKATIRIERAHLEEDAGKNTHGTDGYSYVDLNRQGVPLIEIVSEADMRTPEEAYAYLTALKEAILYTGISDVKMEEGSMRCDANVSLRPYGQEAFGVKTEVKNMNSFSNVKKALDFEVARQAKILRAGGEIRQETRRFNDKTGETILMRVKEGASDYRYFPEPDVPRFEISDEWIEQMRESLPMTATARRAHYINDLGLSDYDARQLTATKEVSDFFDQAIKFDTDPKLVSNWLQGEVAQYLNSEKKELHEIGLTPENLTEMIRLISDGTISSKIAKKVFIELAKNGGSAEEFVKKAGLVQISDPDLLLPIIHEVFAKNEQSVADYRGGKQNAAKALVGQLMKATKGQANPTVAQKLLYQELDNF.

The protein belongs to the GatB/GatE family. GatB subfamily. Heterotrimer of A, B and C subunits.

The catalysed reaction is L-glutamyl-tRNA(Gln) + L-glutamine + ATP + H2O = L-glutaminyl-tRNA(Gln) + L-glutamate + ADP + phosphate + H(+). It catalyses the reaction L-aspartyl-tRNA(Asn) + L-glutamine + ATP + H2O = L-asparaginyl-tRNA(Asn) + L-glutamate + ADP + phosphate + 2 H(+). Allows the formation of correctly charged Asn-tRNA(Asn) or Gln-tRNA(Gln) through the transamidation of misacylated Asp-tRNA(Asn) or Glu-tRNA(Gln) in organisms which lack either or both of asparaginyl-tRNA or glutaminyl-tRNA synthetases. The reaction takes place in the presence of glutamine and ATP through an activated phospho-Asp-tRNA(Asn) or phospho-Glu-tRNA(Gln). This Lactococcus lactis subsp. cremoris (strain SK11) protein is Aspartyl/glutamyl-tRNA(Asn/Gln) amidotransferase subunit B.